The sequence spans 399 residues: Phosphoglycerate kinase (399 aa).

Residues 20 to 22, arginine 35, 58 to 61, arginine 117, and arginine 154 each bind substrate; these read DFN and HLGR. Residues lysine 204, glycine 295, glutamate 326, and 355–358 contribute to the ATP site; that span reads GGDS.

It belongs to the phosphoglycerate kinase family. As to quaternary structure, monomer.

The protein localises to the cytoplasm. The catalysed reaction is (2R)-3-phosphoglycerate + ATP = (2R)-3-phospho-glyceroyl phosphate + ADP. It functions in the pathway carbohydrate degradation; glycolysis; pyruvate from D-glyceraldehyde 3-phosphate: step 2/5. The sequence is that of Phosphoglycerate kinase from Beutenbergia cavernae (strain ATCC BAA-8 / DSM 12333 / CCUG 43141 / JCM 11478 / NBRC 16432 / NCIMB 13614 / HKI 0122).